The sequence spans 343 residues: MSAFTPASEVLLRHSDDFEQSRILFAGDLQDDLPARLDTAASRAHTQQFHHWQVLSRQMGDNARFSLVATVDDVADCDTLIYYWPKNKPEAQFQLMNLLSLLPVGTDIFVVGENRSGVRSAEQMLADYAPLNKVDSARRCGLYFGRLEKQPVFDADKFWGEYSVDGLTVKTLPSVFSRDGLDVGSQLLLSTLTPHTKGKVLDVGCGAGVLSVAFARHSPKIRLTLCDVSAPAVEASRATLAANCVEGEVFASNVFSEVKGRFDMIISNPPFHDGMQTSLDAAQTLIRGAVRHLNSGGELRIVANAFLPYPDVLDETFGFHEVIAQTGRFKVYRAIMTRQAKKG.

It belongs to the methyltransferase superfamily. RsmC family. As to quaternary structure, monomer.

It localises to the cytoplasm. The catalysed reaction is guanosine(1207) in 16S rRNA + S-adenosyl-L-methionine = N(2)-methylguanosine(1207) in 16S rRNA + S-adenosyl-L-homocysteine + H(+). Its function is as follows. Specifically methylates the guanine in position 1207 of 16S rRNA in the 30S particle. The chain is Ribosomal RNA small subunit methyltransferase C from Shigella boydii serotype 4 (strain Sb227).